Consider the following 397-residue polypeptide: Protein Brevis radix-like 1 (397 aa).

Disordered regions lie at residues 14 to 37 (GAPP…AGEC) and 105 to 148 (RAGS…EDDE). Residues 124 to 148 (AGDEEEEEEEEEEEGTTADGSEDDE) are compositionally biased toward acidic residues. Residues 150–205 (KEWVAQVEPGVLITFLSLPEGGNDLKRIRFSREIFNKWQAQRWWAENYEKVMELYN) enclose the BRX 1 domain. Disordered stretches follow at residues 212 to 278 (QTPL…QQHH) and 300 to 342 (SISG…DQER). The span at 220–230 (KSEDESLKEDI) shows a compositional bias: basic and acidic residues. The span at 309–320 (SSMDASMRSSSS) shows a compositional bias: low complexity. One can recognise a BRX 2 domain in the interval 342-397 (REWVEEDEPGVYITIRALPGGIRELRRVRFSREKFSEMHARLWWEENRARIHDQYL).

It belongs to the BRX family.

The protein resides in the nucleus. The sequence is that of Protein Brevis radix-like 1 (BRXL1) from Oryza sativa subsp. japonica (Rice).